The chain runs to 256 residues: Hydroxyacylglutathione hydrolase (256 aa).

Positions 57, 59, 61, 62, 115, 134, and 172 each coordinate Zn(2+).

Belongs to the metallo-beta-lactamase superfamily. Glyoxalase II family. Monomer. It depends on Zn(2+) as a cofactor.

The catalysed reaction is an S-(2-hydroxyacyl)glutathione + H2O = a 2-hydroxy carboxylate + glutathione + H(+). The protein operates within secondary metabolite metabolism; methylglyoxal degradation; (R)-lactate from methylglyoxal: step 2/2. Thiolesterase that catalyzes the hydrolysis of S-D-lactoyl-glutathione to form glutathione and D-lactic acid. The chain is Hydroxyacylglutathione hydrolase from Rhizobium etli (strain ATCC 51251 / DSM 11541 / JCM 21823 / NBRC 15573 / CFN 42).